Consider the following 215-residue polypeptide: Chaperone protein TorD (215 aa).

It belongs to the TorD/DmsD family. TorD subfamily.

It localises to the cytoplasm. Functionally, involved in the biogenesis of TorA. Acts on TorA before the insertion of the molybdenum cofactor and, as a result, probably favors a conformation of the apoenzyme that is competent for acquiring the cofactor. The polypeptide is Chaperone protein TorD (Vibrio vulnificus (strain YJ016)).